The following is a 521-amino-acid chain: Cytochrome P450 monooxygenase gloO (521 aa).

An N-terminal signal peptide occupies residues 1–26 (MIAALFTTNLQLGAVGVFIFALLAFA). Cys-464 is a heme binding site.

It belongs to the cytochrome P450 family. Heme is required as a cofactor.

It participates in mycotoxin biosynthesis. In terms of biological role, cytochrome P450 monooxygenase; part of the gene cluster that mediates the biosynthesis of pneumocandins, lipohexapeptides of the echinocandin family that prevent fungal cell wall formation by non-competitive inhibition of beta-1,3-glucan synthase. The 10,12-dimethylmyristoyl side chain is synthesized by the reducing polyketide synthase gloL/GLPKS4. The thioesterase gloN/GLHYD exclusively interacts with gloL/GLPKS4 to maintain turnover of the polyketide side chain. The 10R,12S-dimethylmyristic acid is then transferred to the first thiolation domain of the nonribosomal peptide synthetase gloA/GLNRPS4 by the acyl-AMP ligase gloD/GLligase, followed by its acylation to L-ornithine to trigger elongation of the cyclic hexapeptide. L-ornithine, 4R-hydroxyl-L-proline (generated from L-proline by the dioxygenase gloF/GLOXY2), 3S-hydroxyl-L-homotyrosine (generated by gloG/GLHtyB, gloH/GLHtyA, gloI/GLHtyC, gloJ/GLHtyD and hydroxylated at C-3 by the dioxygenase gloM/GLOXY1), 3R-hydroxyl-L-glutamine (generated from L-glutamine probably by the dioxygenase gloE/GLOXY3) and 3S-hydroxyl-L-proline (generated from L-proline by the dioxygenase gloF/GLOXY2 to yield pneumocandin B0), or 3S-hydroxyl-4S-methyl-L-proline (generated from L-leucine by the dioxygenase gloC/GLOXY4 to yield pneumocandin A0) are sequentially added to the growing chain. The last C domain of gloA/GLNRPS4 is proposed to be responsible for cyclization by condensation to form the peptide bond between L-ornithine and 3S-hydroxyl-4S-methyl-L-proline (for pneumocandin A0) or 3S-hydroxyl-L-proline (for pneumocandin B0). Finally, the subsequent C-4 hydroxylation of 3S-hydroxyl-L-homotyrosine and L-ornithine dihydroxylation at C-4 and C-5 are performed by the cytochrome P450 monooxygenases gloP/GLP450-1 and gloO/GLP450-2, respectively. This is Cytochrome P450 monooxygenase gloO from Glarea lozoyensis (strain ATCC 20868 / MF5171).